A 115-amino-acid chain; its full sequence is NAD(P)H-quinone oxidoreductase subunit M (115 aa).

Belongs to the complex I NdhM subunit family. In terms of assembly, NDH-1 can be composed of about 15 different subunits; different subcomplexes with different compositions have been identified which probably have different functions.

It is found in the cellular thylakoid membrane. The catalysed reaction is a plastoquinone + NADH + (n+1) H(+)(in) = a plastoquinol + NAD(+) + n H(+)(out). The enzyme catalyses a plastoquinone + NADPH + (n+1) H(+)(in) = a plastoquinol + NADP(+) + n H(+)(out). Its function is as follows. NDH-1 shuttles electrons from an unknown electron donor, via FMN and iron-sulfur (Fe-S) centers, to quinones in the respiratory and/or the photosynthetic chain. The immediate electron acceptor for the enzyme in this species is believed to be plastoquinone. Couples the redox reaction to proton translocation, and thus conserves the redox energy in a proton gradient. Cyanobacterial NDH-1 also plays a role in inorganic carbon-concentration. In Prochlorococcus marinus (strain MIT 9515), this protein is NAD(P)H-quinone oxidoreductase subunit M.